A 934-amino-acid polypeptide reads, in one-letter code: uncharacterized protein (934 aa).

Residues 1-24 form the signal peptide; sequence MKLKKRYLLLGSTLTVSAALILSA. Residue cysteine 25 is the site of N-palmitoyl cysteine attachment. Cysteine 25 carries S-diacylglycerol cysteine lipidation. The tract at residues 111 to 131 is disordered; the sequence is SGLKGRAQKNGSTDSSDGSSK. The span at 119–131 shows a compositional bias: polar residues; the sequence is KNGSTDSSDGSSK.

The protein resides in the cell membrane. This is an uncharacterized protein from Mycoplasma genitalium (strain ATCC 33530 / DSM 19775 / NCTC 10195 / G37) (Mycoplasmoides genitalium).